The following is a 254-amino-acid chain: tRNA 2'-phosphotransferase 1 (254 aa).

Position 1 is an N-acetylmethionine (Met1). Disordered stretches follow at residues 1 to 30 (MNSF…DRDV) and 225 to 254 (RKPL…MTQQ). A compositionally biased stretch (basic and acidic residues) spans 233–244 (NEEKEHQRDSKH).

Belongs to the KptA/TPT1 family.

The enzyme catalyses 2'-phospho-[ligated tRNA] + NAD(+) = mature tRNA + ADP-alpha-D-ribose 1'',2''-cyclic phosphate + nicotinamide. Functionally, catalyzes the last step of tRNA splicing, the transfer of the splice junction 2'-phosphate from ligated tRNA to NAD to produce ADP-ribose 1''-2'' cyclic phosphate. The chain is tRNA 2'-phosphotransferase 1 (TRPT1) from Bos taurus (Bovine).